Reading from the N-terminus, the 560-residue chain is Beta-hexosaminidase subunit B1 (560 aa).

The signal sequence occupies residues 1 to 25; that stretch reads MIILKRNIVFLLIIIIVLGIFIATS. Residues N59, N69, N81, N99, N161, N293, and N346 are each glycosylated (N-linked (GlcNAc...) asparagine). The active-site Proton donor is E359. N-linked (GlcNAc...) asparagine glycosylation is found at N366, N436, N472, and N547.

Belongs to the glycosyl hydrolase 20 family.

Its subcellular location is the lysosome. It catalyses the reaction Hydrolysis of terminal non-reducing N-acetyl-D-hexosamine residues in N-acetyl-beta-D-hexosaminides.. Its function is as follows. Responsible for the degradation of GM2 gangliosides, and a variety of other molecules containing terminal N-acetyl hexosamines. The protein is Beta-hexosaminidase subunit B1 (hexb1) of Dictyostelium discoideum (Social amoeba).